A 551-amino-acid polypeptide reads, in one-letter code: MEEFVGIVRGEASFTSYEFSINPSANVSFGEFVVTKNRDGDLVLGTVRHVKNVNWLLSSVKSNFNSLALDIEEYGESLGENEEVVATVRILGKIEGNELVPNRVPIRNGEYVYKASDDLLQMIYGNDGIEIGTLLLRPNVRIKLDVNELVSRHFAVLAVTGAGKSNAVAVIIKGIVEDVGGTVVVLDPHGDYVNLRLPETGIDLVNIIDGKIRIEDLDPEELADLIGISSSAQIQRHFLSLAWETVKHKNQSLGGESLLEALLDLLNEWISRKTIKYWSEKEGRMKSEDLKSERIETIRGIIFRIRRFLRNYGNIVTSENLVAAIKPGMVNVIDLSPLDENQMKVVVGKFLEAVFEKRVEYEMARKRFEKETSKKKRDEYEEIMTEIESKYPALAYPILVIVEEAHIFAPQGEENDAMRIMGRIAREGRKFGVGLGVVSQRPSKLNEDILSQMNTKIILRIVNPRDQDYVLKASEQLSKDLMDDIAGLGKGEAVIVGQAIKLPALVRIYNFKELRGKAGTGQYGGEDIGILDRWNKMKRNMVNSLDIDIDF.

ATP contacts are provided by residues arginine 152, 161 to 166, and 507 to 508; these read GAGKSN and RI.

It belongs to the HerA family. In terms of assembly, homohexamer. Interacts with NurA.

The enzyme catalyses Couples ATP hydrolysis with the unwinding of duplex DNA at the replication fork by translocating in the 5'-3' direction. This creates two antiparallel DNA single strands (ssDNA). The leading ssDNA polymer is the template for DNA polymerase III holoenzyme which synthesizes a continuous strand.. It carries out the reaction ATP + H2O = ADP + phosphate + H(+). It catalyses the reaction Couples ATP hydrolysis with the unwinding of duplex DNA by translocating in the 3'-5' direction.. Its activity is regulated as follows. Helicase activity is stimulated in the presence of NurA. In terms of biological role, involved in DNA double-strand break (DSB) repair. Probably acts with NurA to stimulate resection of the 5' strand and produce the long 3' single-strand that is required for RadA loading. Has DNA-dependent ATPase activity and DNA helicase activity. The sequence is that of DNA double-strand break repair helicase HerA from Pyrococcus furiosus (strain ATCC 43587 / DSM 3638 / JCM 8422 / Vc1).